A 329-amino-acid polypeptide reads, in one-letter code: Tryptophan--tRNA ligase (329 aa).

ATP-binding positions include 9–11 (QPS) and 17–18 (GN). The short motif at 10 to 18 (PSGIPTIGN) is the 'HIGH' region element. D133 provides a ligand contact to L-tryptophan. ATP is bound by residues 145 to 147 (GDD), V184, and 193 to 197 (KMSKS). The 'KMSKS' region motif lies at 193-197 (KMSKS).

It belongs to the class-I aminoacyl-tRNA synthetase family. In terms of assembly, homodimer.

The protein localises to the cytoplasm. The catalysed reaction is tRNA(Trp) + L-tryptophan + ATP = L-tryptophyl-tRNA(Trp) + AMP + diphosphate + H(+). Its function is as follows. Catalyzes the attachment of tryptophan to tRNA(Trp). The sequence is that of Tryptophan--tRNA ligase from Staphylococcus epidermidis (strain ATCC 35984 / DSM 28319 / BCRC 17069 / CCUG 31568 / BM 3577 / RP62A).